A 272-amino-acid chain; its full sequence is Bifunctional protein FolD (272 aa).

NADP(+) is bound by residues 155–157 (GRS), serine 182, and isoleucine 223.

The protein belongs to the tetrahydrofolate dehydrogenase/cyclohydrolase family. Homodimer.

The enzyme catalyses (6R)-5,10-methylene-5,6,7,8-tetrahydrofolate + NADP(+) = (6R)-5,10-methenyltetrahydrofolate + NADPH. It catalyses the reaction (6R)-5,10-methenyltetrahydrofolate + H2O = (6R)-10-formyltetrahydrofolate + H(+). Its pathway is one-carbon metabolism; tetrahydrofolate interconversion. Functionally, catalyzes the oxidation of 5,10-methylenetetrahydrofolate to 5,10-methenyltetrahydrofolate and then the hydrolysis of 5,10-methenyltetrahydrofolate to 10-formyltetrahydrofolate. The protein is Bifunctional protein FolD of Fervidobacterium nodosum (strain ATCC 35602 / DSM 5306 / Rt17-B1).